Consider the following 495-residue polypeptide: Glutamate--tRNA ligase (495 aa).

The 'HIGH' region motif lies at 13–23 (PSPTGTPHVGL). The 'KMSKS' region signature appears at 257–261 (KLSKR). K260 is a binding site for ATP.

It belongs to the class-I aminoacyl-tRNA synthetase family. Glutamate--tRNA ligase type 1 subfamily. As to quaternary structure, monomer.

It localises to the cytoplasm. The catalysed reaction is tRNA(Glu) + L-glutamate + ATP = L-glutamyl-tRNA(Glu) + AMP + diphosphate. Functionally, catalyzes the attachment of glutamate to tRNA(Glu) in a two-step reaction: glutamate is first activated by ATP to form Glu-AMP and then transferred to the acceptor end of tRNA(Glu). This Mycolicibacterium vanbaalenii (strain DSM 7251 / JCM 13017 / BCRC 16820 / KCTC 9966 / NRRL B-24157 / PYR-1) (Mycobacterium vanbaalenii) protein is Glutamate--tRNA ligase.